The primary structure comprises 205 residues: IQ domain-containing protein F1 (205 aa).

Basic and acidic residues-rich tracts occupy residues 1–24 (MEEK…KEMP) and 51–68 (ANEK…LSDK). Residues 1–68 (MEEKQPQKTK…PENQKKLSDK (68 aa)) form a disordered region. 2 IQ domains span residues 68–97 (KDTV…SACI) and 124–153 (KEWA…AVRI).

As to quaternary structure, interacts with calmodulin.

The protein localises to the cytoplasmic vesicle. Its subcellular location is the secretory vesicle. It is found in the acrosome. Involved in sperm capacitation and acrosome reaction. This Homo sapiens (Human) protein is IQ domain-containing protein F1.